A 475-amino-acid polypeptide reads, in one-letter code: MSPQTETKASVGFKAGVKDYRLTYYTPEYETQDTDILAAFRVSPQPGVPPEEAGAAVAAESSTGTWTSVWTDGLTNLDRYKGRCYNIEPVAGEENQYICYVAYPLDLFEEGSVTNMFTSIVGNVFGFKALRALRLEDLRIPVAYVKTFQGPPHGIQVERDKLNKYGRPLLGCTIKPKLGLSAKNYGRACYECLRGGLDFTKDDENVNSQPFMRWRDRFLFCAEAIYKSQAETGEIKGHYLNATAGTCEEMIKRAVFARELGVPIVMHDYLTGGFTANTSLSQYCRDNGLLLHIHVAMHAVIDRQKNHGMHFRVLAKALRLSGGDHIHSGTVVGKLEGERDITLGFVDLLRDDYTEKDRCRGIFFTQSWVSTPGVLPVASGGIHVWHMPALTEIFGDDSVLQFGGGTLGHPWGNAPGAVANRVALEACVQARNEGRDLAREGNTIIREAAKWSPELAAACEVWKEIKFEFPAMDTI.

A propeptide spanning residues methionine 1–serine 2 is cleaved from the precursor. Proline 3 bears the N-acetylproline mark. The residue at position 14 (lysine 14) is an N6,N6,N6-trimethyllysine. Substrate is bound by residues asparagine 123 and threonine 173. Catalysis depends on lysine 175, which acts as the Proton acceptor. Lysine 177 provides a ligand contact to substrate. Positions 201, 203, and 204 each coordinate Mg(2+). Lysine 201 carries the post-translational modification N6-carboxylysine. Histidine 294 acts as the Proton acceptor in catalysis. Histidine 327 and serine 379 together coordinate substrate.

The protein belongs to the RuBisCO large chain family. Type I subfamily. In terms of assembly, heterohexadecamer of 8 large chains and 8 small chains; disulfide-linked. The disulfide link is formed within the large subunit homodimers. Requires Mg(2+) as cofactor. In terms of processing, the disulfide bond which can form in the large chain dimeric partners within the hexadecamer appears to be associated with oxidative stress and protein turnover.

The protein localises to the plastid. It localises to the chloroplast. The catalysed reaction is 2 (2R)-3-phosphoglycerate + 2 H(+) = D-ribulose 1,5-bisphosphate + CO2 + H2O. The enzyme catalyses D-ribulose 1,5-bisphosphate + O2 = 2-phosphoglycolate + (2R)-3-phosphoglycerate + 2 H(+). In terms of biological role, ruBisCO catalyzes two reactions: the carboxylation of D-ribulose 1,5-bisphosphate, the primary event in carbon dioxide fixation, as well as the oxidative fragmentation of the pentose substrate in the photorespiration process. Both reactions occur simultaneously and in competition at the same active site. This Amaranthus hypochondriacus (Prince-of-Wales feather) protein is Ribulose bisphosphate carboxylase large chain.